Here is a 312-residue protein sequence, read N- to C-terminus: GDSL esterase/lipase At2g38180 (312 aa).

Positions 1 to 22 (MVGPVRPQIVLFGSSIVQYSFT) are cleaved as a signal peptide. Asn79 carries an N-linked (GlcNAc...) asparagine glycan. The disordered stretch occupies residues 285 to 312 (EPPHPVSLCDHELTQNEQLEPPQPTARL).

This sequence belongs to the 'GDSL' lipolytic enzyme family.

Its subcellular location is the secreted. This Arabidopsis thaliana (Mouse-ear cress) protein is GDSL esterase/lipase At2g38180.